Consider the following 738-residue polypeptide: Multifunctional procollagen lysine hydroxylase and glycosyltransferase LH3 (738 aa).

A signal peptide spans 1 to 24 (MTSSGPGPRFLLLLPLLLPPAASA). Residues 25 to 290 (SDRPRGRDPV…FCNQDRRTLP (266 aa)) are required for glycosyltransferase activity. Residue 44–46 (VAT) coordinates UDP. Asn63 carries an N-linked (GlcNAc...) asparagine glycan. The Mn(2+) site is built by Asp112, Asp115, and His253. Residue 112-114 (DSY) participates in UDP binding. Residue 256 to 259 (GPTK) coordinates UDP. Intrachain disulfides connect Cys279–Cys282 and Cys379–Cys385. Residues 295–520 (PPRVFLAVFV…EFGRLLATSR (226 aa)) are accessory region. Asn548 is a glycosylation site (N-linked (GlcNAc...) asparagine). Cys563 and Cys698 are disulfide-bonded. Residues Arg599 and Tyr656 each contribute to the 2-oxoglutarate site. The Fe2OG dioxygenase domain maps to 647–738 (RAVMNFVVRY…RYIMVSFVDP (92 aa)). Residues His667 and Asp669 each coordinate Fe cation. The segment at 672–715 (TFTLNVALNHKGLDYEGGGCRFLRYDCVISSPRKGWALLHPGRL) is important for dimerization. 2-oxoglutarate is bound at residue Asn676. Position 719 (His719) interacts with Fe cation. Arg729 lines the 2-oxoglutarate pocket.

In terms of assembly, homodimer. Requires Fe(2+) as cofactor. L-ascorbate is required as a cofactor. The cofactor is Mn(2+).

It localises to the rough endoplasmic reticulum. The protein resides in the endoplasmic reticulum lumen. It is found in the endoplasmic reticulum membrane. Its subcellular location is the secreted. The protein localises to the extracellular space. The enzyme catalyses L-lysyl-[collagen] + 2-oxoglutarate + O2 = (5R)-5-hydroxy-L-lysyl-[collagen] + succinate + CO2. It catalyses the reaction (5R)-5-hydroxy-L-lysyl-[collagen] + UDP-alpha-D-galactose = (5R)-5-O-(beta-D-galactosyl)-5-hydroxy-L-lysyl-[collagen] + UDP + H(+). The catalysed reaction is (5R)-5-O-(beta-D-galactosyl)-5-hydroxy-L-lysyl-[collagen] + UDP-alpha-D-glucose = (5R)-5-O-[alpha-D-glucosyl-(1-&gt;2)-beta-D-galactosyl]-5-hydroxy-L-lysyl-[collagen] + UDP + H(+). Its function is as follows. Multifunctional enzyme that catalyzes a series of post-translational modifications on Lys residues in procollagen. Plays a redundant role in catalyzing the formation of hydroxylysine residues in -Xaa-Lys-Gly- sequences in collagens. Plays a redundant role in catalyzing the transfer of galactose onto hydroxylysine groups, giving rise to galactosyl 5-hydroxylysine. Has an essential role by catalyzing the subsequent transfer of glucose moieties, giving rise to 1,2-glucosylgalactosyl-5-hydroxylysine residues. Catalyzes hydroxylation and glycosylation of Lys residues in the MBL1 collagen-like domain, giving rise to hydroxylysine and 1,2-glucosylgalactosyl-5-hydroxylysine residues. Catalyzes hydroxylation and glycosylation of Lys residues in the ADIPOQ collagen-like domain, giving rise to hydroxylysine and 1,2-glucosylgalactosyl-5-hydroxylysine residues. Essential for normal biosynthesis and secretion of type IV collagens. Essential for normal formation of basement membranes. This chain is Multifunctional procollagen lysine hydroxylase and glycosyltransferase LH3 (PLOD3), found in Pongo abelii (Sumatran orangutan).